The chain runs to 298 residues: Cytosolic Fe-S cluster assembly factor CFD1 (298 aa).

25-32 (GKGGVGKS) provides a ligand contact to ATP. 2 residues coordinate [4Fe-4S] cluster: Cys215 and Cys218.

The protein belongs to the Mrp/NBP35 ATP-binding proteins family. NUBP2/CFD1 subfamily. Heterotetramer of 2 NBP35 and 2 CFD1 chains. [4Fe-4S] cluster is required as a cofactor.

The protein localises to the cytoplasm. Functionally, component of the cytosolic iron-sulfur (Fe/S) protein assembly (CIA) machinery. Required for maturation of extramitochondrial Fe-S proteins. The NBP35-CFD1 heterotetramer forms a Fe-S scaffold complex, mediating the de novo assembly of an Fe-S cluster and its transfer to target apoproteins. Required for biogenesis and export of both ribosomal subunits, which may reflect a role in assembly of the Fe/S clusters in RLI1, a protein which performs rRNA processing and ribosome export. The chain is Cytosolic Fe-S cluster assembly factor CFD1 from Debaryomyces hansenii (strain ATCC 36239 / CBS 767 / BCRC 21394 / JCM 1990 / NBRC 0083 / IGC 2968) (Yeast).